The chain runs to 276 residues: Probable doxorubicin resistance ABC transporter permease protein DrrC (276 aa).

6 consecutive transmembrane segments (helical) span residues 46 to 66 (ITVI…NIVL), 82 to 102 (IVPL…AIDL), 129 to 149 (ILAN…TGVV), 159 to 179 (IPSL…AAMV), 190 to 210 (VVVE…TGLV), and 248 to 268 (MIGM…PLAI). The 228-residue stretch at 46–273 (ITVIGAIVLP…VPLAIGYRRA (228 aa)) folds into the ABC transmembrane type-2 domain.

This sequence belongs to the ABC-2 integral membrane protein family. The complex is composed of two ATP-binding proteins (DrrA) and two transmembrane proteins (DrrB and DrrC).

Its subcellular location is the cell membrane. Its function is as follows. Probably part of the ABC transporter complex DrrABC involved in doxorubicin resistance. Probably responsible for the translocation of the substrate across the membrane. The protein is Probable doxorubicin resistance ABC transporter permease protein DrrC (drrC) of Mycobacterium tuberculosis (strain CDC 1551 / Oshkosh).